A 53-amino-acid polypeptide reads, in one-letter code: Mitochondrial sheath formation-associated protein (53 aa).

Mitochondrial intermembrane loops occupy residues 1–6 (MIVLGW) and 1–7 (MIVLGWM). 2 consecutive transmembrane segments (helical) span residues 7 to 23 (MLFV…PEAM) and 8 to 24 (LFVG…EAMP). 2 consecutive stretches face the cytoplasmic side: residues 24-53 (PPTL…ELLL) and 25-40 (PTLK…ENKA).

In terms of assembly, interacts with VDAC3. Testis specific. Detected only in germ cells at the step of spermiogenesis (at protein level). Expressed during the middle steps of spermatid development. As to expression, testis specific. Detected only in germ cells at the step of spermiogenesis (at protein level). Expressed in the late steps of spermatid development.

The protein resides in the mitochondrion outer membrane. In terms of biological role, regulates sperm development. May be involved in mitochondrial sheath formation. This is Mitochondrial sheath formation-associated protein from Mus musculus (Mouse).